The primary structure comprises 326 residues: N-acetyl-gamma-glutamyl-phosphate reductase (326 aa).

Cysteine 155 is a catalytic residue.

The protein belongs to the NAGSA dehydrogenase family. Type 1 subfamily.

It is found in the cytoplasm. The enzyme catalyses N-acetyl-L-glutamate 5-semialdehyde + phosphate + NADP(+) = N-acetyl-L-glutamyl 5-phosphate + NADPH + H(+). It participates in amino-acid biosynthesis; L-arginine biosynthesis; N(2)-acetyl-L-ornithine from L-glutamate: step 3/4. Its function is as follows. Catalyzes the NADPH-dependent reduction of N-acetyl-5-glutamyl phosphate to yield N-acetyl-L-glutamate 5-semialdehyde. The sequence is that of N-acetyl-gamma-glutamyl-phosphate reductase from Shewanella baltica (strain OS195).